A 210-amino-acid polypeptide reads, in one-letter code: MMMNGQKMAAAEVAVQLPESKMVTENIGGAAAAMRPFGRKAEVMNVLLRVLCMVTSVAALSSMVTAQQSSTVSIYGFMLPIQSKWSFSHSFEYVVGVSAVVAAHSLLQLLISVSRLLRKSPVIQSRSHAWLVFAGDQVFAYAMISAGAAASGVTNLNRTGIRHTALPNFCKPLQSFCDHVAVSIFFTFLSCFLLAASAVQEVIWLSRSKY.

Over 1–45 (MMMNGQKMAAAEVAVQLPESKMVTENIGGAAAAMRPFGRKAEVMN) the chain is Cytoplasmic. A helical membrane pass occupies residues 46–66 (VLLRVLCMVTSVAALSSMVTA). Residues 67 to 92 (QQSSTVSIYGFMLPIQSKWSFSHSFE) are Extracellular-facing. The helical transmembrane segment at 93-113 (YVVGVSAVVAAHSLLQLLISV) threads the bilayer. The Cytoplasmic segment spans residues 114 to 128 (SRLLRKSPVIQSRSH). The helical transmembrane segment at 129–149 (AWLVFAGDQVFAYAMISAGAA) threads the bilayer. Residues 150 to 178 (ASGVTNLNRTGIRHTALPNFCKPLQSFCD) lie on the Extracellular side of the membrane. Asn-157 carries N-linked (GlcNAc...) asparagine glycosylation. A helical transmembrane segment spans residues 179–199 (HVAVSIFFTFLSCFLLAASAV). Topologically, residues 200–210 (QEVIWLSRSKY) are cytoplasmic.

It belongs to the Casparian strip membrane proteins (CASP) family. In terms of assembly, homodimer and heterodimers.

It is found in the cell membrane. The protein is CASP-like protein 3A2 of Populus trichocarpa (Western balsam poplar).